Consider the following 301-residue polypeptide: Nucleotide-binding protein Rfer_1653 (301 aa).

Residue 15–22 (GMSGSGKS) participates in ATP binding. Residue 64–67 (DVRT) coordinates GTP.

This sequence belongs to the RapZ-like family.

Displays ATPase and GTPase activities. The sequence is that of Nucleotide-binding protein Rfer_1653 from Albidiferax ferrireducens (strain ATCC BAA-621 / DSM 15236 / T118) (Rhodoferax ferrireducens).